A 227-amino-acid polypeptide reads, in one-letter code: Cytochrome c oxidase subunit 2 (227 aa).

The Mitochondrial intermembrane portion of the chain corresponds to 1–14; it reads MAYPMQLGFQDATS. A helical membrane pass occupies residues 15–45; it reads PIMEELLHFHDHTLMIVFLISSLVLYVISLM. Over 46 to 59 the chain is Mitochondrial matrix; that stretch reads LTTKLTHTSTMDAQ. Residues 60–87 form a helical membrane-spanning segment; that stretch reads EVETIWTILPAIILILIALPSLRILYMM. Residues 88-227 lie on the Mitochondrial intermembrane side of the membrane; the sequence is DEINNPSLTV…YFEKWSASML (140 aa). Residues histidine 161, cysteine 196, glutamate 198, cysteine 200, histidine 204, and methionine 207 each coordinate Cu cation. Mg(2+) is bound at residue glutamate 198. A Phosphotyrosine modification is found at tyrosine 218.

The protein belongs to the cytochrome c oxidase subunit 2 family. In terms of assembly, component of the cytochrome c oxidase (complex IV, CIV), a multisubunit enzyme composed of 14 subunits. The complex is composed of a catalytic core of 3 subunits MT-CO1, MT-CO2 and MT-CO3, encoded in the mitochondrial DNA, and 11 supernumerary subunits COX4I, COX5A, COX5B, COX6A, COX6B, COX6C, COX7A, COX7B, COX7C, COX8 and NDUFA4, which are encoded in the nuclear genome. The complex exists as a monomer or a dimer and forms supercomplexes (SCs) in the inner mitochondrial membrane with NADH-ubiquinone oxidoreductase (complex I, CI) and ubiquinol-cytochrome c oxidoreductase (cytochrome b-c1 complex, complex III, CIII), resulting in different assemblies (supercomplex SCI(1)III(2)IV(1) and megacomplex MCI(2)III(2)IV(2)). Found in a complex with TMEM177, COA6, COX18, COX20, SCO1 and SCO2. Interacts with TMEM177 in a COX20-dependent manner. Interacts with COX20. Interacts with COX16. Cu cation serves as cofactor.

Its subcellular location is the mitochondrion inner membrane. It carries out the reaction 4 Fe(II)-[cytochrome c] + O2 + 8 H(+)(in) = 4 Fe(III)-[cytochrome c] + 2 H2O + 4 H(+)(out). Functionally, component of the cytochrome c oxidase, the last enzyme in the mitochondrial electron transport chain which drives oxidative phosphorylation. The respiratory chain contains 3 multisubunit complexes succinate dehydrogenase (complex II, CII), ubiquinol-cytochrome c oxidoreductase (cytochrome b-c1 complex, complex III, CIII) and cytochrome c oxidase (complex IV, CIV), that cooperate to transfer electrons derived from NADH and succinate to molecular oxygen, creating an electrochemical gradient over the inner membrane that drives transmembrane transport and the ATP synthase. Cytochrome c oxidase is the component of the respiratory chain that catalyzes the reduction of oxygen to water. Electrons originating from reduced cytochrome c in the intermembrane space (IMS) are transferred via the dinuclear copper A center (CU(A)) of subunit 2 and heme A of subunit 1 to the active site in subunit 1, a binuclear center (BNC) formed by heme A3 and copper B (CU(B)). The BNC reduces molecular oxygen to 2 water molecules using 4 electrons from cytochrome c in the IMS and 4 protons from the mitochondrial matrix. The chain is Cytochrome c oxidase subunit 2 (MT-CO2) from Rusa unicolor (Sambar).